The sequence spans 513 residues: ATP synthase subunit alpha (513 aa).

169 to 176 (GDRQTGKT) contributes to the ATP binding site.

It belongs to the ATPase alpha/beta chains family. F-type ATPases have 2 components, CF(1) - the catalytic core - and CF(0) - the membrane proton channel. CF(1) has five subunits: alpha(3), beta(3), gamma(1), delta(1), epsilon(1). CF(0) has three main subunits: a(1), b(2) and c(9-12). The alpha and beta chains form an alternating ring which encloses part of the gamma chain. CF(1) is attached to CF(0) by a central stalk formed by the gamma and epsilon chains, while a peripheral stalk is formed by the delta and b chains.

The protein localises to the cell inner membrane. The catalysed reaction is ATP + H2O + 4 H(+)(in) = ADP + phosphate + 5 H(+)(out). In terms of biological role, produces ATP from ADP in the presence of a proton gradient across the membrane. The alpha chain is a regulatory subunit. This is ATP synthase subunit alpha from Haemophilus influenzae (strain PittEE).